Consider the following 71-residue polypeptide: Ceratotoxin-D (71 aa).

The first 23 residues, 1-23, serve as a signal peptide directing secretion; it reads MANLKAVFLICILAFIAFHCVVG. The propeptide occupies 24-35; it reads APTAEDSIVVKR.

As to quaternary structure, homomer of four to six subunits.

It is found in the secreted. Functionally, female-specific peptides with potent activity against Gram-positive and Gram-negative bacteria. They have as well hemolytic activity. The chain is Ceratotoxin-D (CTXD) from Ceratitis capitata (Mediterranean fruit fly).